Here is a 492-residue protein sequence, read N- to C-terminus: Regulatory protein ViaA (492 aa).

It belongs to the ViaA family. In terms of assembly, homodimer. Interacts with RavA.

The protein localises to the cytoplasm. Component of the RavA-ViaA chaperone complex, which may act on the membrane to optimize the function of some of the respiratory chains. ViaA stimulates the ATPase activity of RavA. The sequence is that of Regulatory protein ViaA from Pectobacterium carotovorum subsp. carotovorum (strain PC1).